Consider the following 224-residue polypeptide: Ras-related protein RABA4b (224 aa).

Alanine 2 is modified (N-acetylalanine). Glycine 24–serine 31 is a GTP binding site. The short motif at serine 46–phenylalanine 54 is the Effector region element. GTP contacts are provided by residues aspartate 72–glutamine 76, asparagine 130–aspartate 133, and serine 160–alanine 161. S-geranylgeranyl cysteine attachment occurs at residues cysteine 220 and cysteine 221.

Belongs to the small GTPase superfamily. Rab family. In terms of assembly, interacts with TCTP1. In terms of tissue distribution, expressed in roots, stems, leaves and flowers. Expressed in tips of growing root hair cells.

Its subcellular location is the early endosome membrane. The protein localises to the golgi apparatus. It is found in the trans-Golgi network membrane. Its function is as follows. Regulator of membrane trafficking. May be required for secretion of cell wall components in cells. The polypeptide is Ras-related protein RABA4b (Arabidopsis thaliana (Mouse-ear cress)).